The sequence spans 420 residues: MAPK/MAK/MRK overlapping kinase (420 aa).

A Protein kinase domain is found at 4-285 (YKAIGKIGEG…AHQALQHPYF (282 aa)). ATP is bound by residues 10–18 (IGEGTFSEV) and lysine 33. Residue aspartate 128 is the Proton acceptor of the active site. The segment covering 311 to 322 (PESSSHNWSFSQ) has biased composition (polar residues). The tract at residues 311–344 (PESSSHNWSFSQEGRKQKQSLRHEEGHARRQGPT) is disordered. Residues 323–338 (EGRKQKQSLRHEEGHA) show a composition bias toward basic and acidic residues.

The protein belongs to the protein kinase superfamily. CMGC Ser/Thr protein kinase family. CDC2/CDKX subfamily. The cofactor is Mg(2+). Autophosphorylated. As to expression, highly expressed in testis, and less in kidney, brain and lung.

It is found in the cytoplasm. The protein resides in the cell projection. It localises to the cilium. The protein localises to the nucleus. It catalyses the reaction L-seryl-[protein] + ATP = O-phospho-L-seryl-[protein] + ADP + H(+). The catalysed reaction is L-threonyl-[protein] + ATP = O-phospho-L-threonyl-[protein] + ADP + H(+). Its activity is regulated as follows. Phosphorylation appears to increase the enzymatic activity. Able to phosphorylate several exogenous substrates and to undergo autophosphorylation. Negatively regulates cilium length in a cAMP and mTORC1 signaling-dependent manner. This Mus musculus (Mouse) protein is MAPK/MAK/MRK overlapping kinase (Mok).